A 655-amino-acid chain; its full sequence is Kelch-like protein 13 (655 aa).

In terms of domain architecture, BTB spans 92-161 (CDVTLMPGDT…IYTAKLSLNM (70 aa)). In terms of domain architecture, BACK spans 196–297 (CVEVGRIANT…TPQELINYVQ (102 aa)). Kelch repeat units lie at residues 341–389 (HLVT…VIGN), 390–441 (FLYV…ALKG), 442–488 (YLYA…VYGG), 490–535 (MYIS…TVGE), 537–587 (LYVI…VFEN), and 588–636 (KIYV…TLTV).

Component of the BCR(KLHL9-KLHL13) E3 ubiquitin ligase complex, at least composed of CUL3, KLHL9, KLHL13 and RBX1. Interacts with AURKB.

It participates in protein modification; protein ubiquitination. Substrate-specific adapter of a BCR (BTB-CUL3-RBX1) E3 ubiquitin-protein ligase complex required for mitotic progression and cytokinesis. The BCR(KLHL9-KLHL13) E3 ubiquitin ligase complex mediates the ubiquitination of AURKB and controls the dynamic behavior of AURKB on mitotic chromosomes and thereby coordinates faithful mitotic progression and completion of cytokinesis. The polypeptide is Kelch-like protein 13 (KLHL13) (Bos taurus (Bovine)).